The primary structure comprises 189 residues: Protein GrpE (189 aa).

Residues 1–20 are compositionally biased toward polar residues; sequence MSDQQHSAPQNAAATASPSD. The segment at 1–29 is disordered; that stretch reads MSDQQHSAPQNAAATASPSDSPEAVEATM.

The protein belongs to the GrpE family. Homodimer.

Its subcellular location is the cytoplasm. Participates actively in the response to hyperosmotic and heat shock by preventing the aggregation of stress-denatured proteins, in association with DnaK and GrpE. It is the nucleotide exchange factor for DnaK and may function as a thermosensor. Unfolded proteins bind initially to DnaJ; upon interaction with the DnaJ-bound protein, DnaK hydrolyzes its bound ATP, resulting in the formation of a stable complex. GrpE releases ADP from DnaK; ATP binding to DnaK triggers the release of the substrate protein, thus completing the reaction cycle. Several rounds of ATP-dependent interactions between DnaJ, DnaK and GrpE are required for fully efficient folding. This chain is Protein GrpE, found in Paracidovorax citrulli (strain AAC00-1) (Acidovorax citrulli).